The following is a 148-amino-acid chain: MNLSNLKPAEGSTKTRKRIGRGAGSGLGGTSTRGHKGAKSRSGYSKKVGFEGGQMPLQRRVPKFGFKNINRVEYKAINLDTIQTLADAKNLTKVGISDFIEAGFISSNQLVKVLGNGALTNKLEVEANAFSKSAAAAIEAAGGTVVKL.

Residues 1-51 form a disordered region; the sequence is MNLSNLKPAEGSTKTRKRIGRGAGSGLGGTSTRGHKGAKSRSGYSKKVGFE. The span at 21 to 31 shows a compositional bias: gly residues; sequence RGAGSGLGGTS.

The protein belongs to the universal ribosomal protein uL15 family. In terms of assembly, part of the 50S ribosomal subunit.

Its function is as follows. Binds to the 23S rRNA. The protein is Large ribosomal subunit protein uL15 of Bacteroides thetaiotaomicron (strain ATCC 29148 / DSM 2079 / JCM 5827 / CCUG 10774 / NCTC 10582 / VPI-5482 / E50).